Reading from the N-terminus, the 317-residue chain is Protoheme IX farnesyltransferase (317 aa).

The next 7 helical transmembrane spans lie at 33-53 (VMSL…GEIN), 54-74 (PILG…SGAL), 117-137 (VILG…TIFF), 154-174 (IVIG…CVTG), 181-201 (VILF…LALF), 242-262 (FFTG…SAIF), and 285-305 (MFAY…ADHF).

Belongs to the UbiA prenyltransferase family. Protoheme IX farnesyltransferase subfamily.

The protein localises to the cell inner membrane. The catalysed reaction is heme b + (2E,6E)-farnesyl diphosphate + H2O = Fe(II)-heme o + diphosphate. It participates in porphyrin-containing compound metabolism; heme O biosynthesis; heme O from protoheme: step 1/1. In terms of biological role, converts heme B (protoheme IX) to heme O by substitution of the vinyl group on carbon 2 of heme B porphyrin ring with a hydroxyethyl farnesyl side group. This is Protoheme IX farnesyltransferase from Agrobacterium fabrum (strain C58 / ATCC 33970) (Agrobacterium tumefaciens (strain C58)).